The following is a 522-amino-acid chain: Peptide chain release factor 3 (522 aa).

The tr-type G domain occupies 9–276 (KKRRTFAIIS…SFVNLAPAPQ (268 aa)). GTP contacts are provided by residues 18–25 (SHPDAGKT), 86–90 (DTPGH), and 140–143 (NKLD).

It belongs to the TRAFAC class translation factor GTPase superfamily. Classic translation factor GTPase family. PrfC subfamily.

The protein resides in the cytoplasm. Increases the formation of ribosomal termination complexes and stimulates activities of RF-1 and RF-2. It binds guanine nucleotides and has strong preference for UGA stop codons. It may interact directly with the ribosome. The stimulation of RF-1 and RF-2 is significantly reduced by GTP and GDP, but not by GMP. The polypeptide is Peptide chain release factor 3 (Lactobacillus gasseri (strain ATCC 33323 / DSM 20243 / BCRC 14619 / CIP 102991 / JCM 1131 / KCTC 3163 / NCIMB 11718 / NCTC 13722 / AM63)).